We begin with the raw amino-acid sequence, 124 residues long: Fluoride-specific ion channel FluC (124 aa).

The next 4 helical transmembrane spans lie at 4 to 24, 35 to 55, 67 to 87, and 96 to 116; these read IVLL…LAGL, LGTF…WGVC, VVLL…TFES, and WLAF…LLWL. Residues Gly75 and Thr78 each coordinate Na(+).

This sequence belongs to the fluoride channel Fluc/FEX (TC 1.A.43) family.

The protein localises to the cell inner membrane. The catalysed reaction is fluoride(in) = fluoride(out). Na(+) is not transported, but it plays an essential structural role and its presence is essential for fluoride channel function. Fluoride-specific ion channel. Important for reducing fluoride concentration in the cell, thus reducing its toxicity. This is Fluoride-specific ion channel FluC from Nitratidesulfovibrio vulgaris (strain DSM 19637 / Miyazaki F) (Desulfovibrio vulgaris).